Reading from the N-terminus, the 502-residue chain is Glycogen synthase 1 (502 aa).

An ADP-alpha-D-glucose-binding site is contributed by Lys18.

Belongs to the glycosyltransferase 1 family. Bacterial/plant glycogen synthase subfamily.

It carries out the reaction [(1-&gt;4)-alpha-D-glucosyl](n) + ADP-alpha-D-glucose = [(1-&gt;4)-alpha-D-glucosyl](n+1) + ADP + H(+). The protein operates within glycan biosynthesis; glycogen biosynthesis. Its function is as follows. Synthesizes alpha-1,4-glucan chains using ADP-glucose. The protein is Glycogen synthase 1 of Geobacter metallireducens (strain ATCC 53774 / DSM 7210 / GS-15).